The primary structure comprises 414 residues: Enolase (414 aa).

Glutamine 162 provides a ligand contact to (2R)-2-phosphoglycerate. Glutamate 204 acts as the Proton donor in catalysis. Mg(2+)-binding residues include aspartate 239, glutamate 280, and aspartate 307. 4 residues coordinate (2R)-2-phosphoglycerate: lysine 332, arginine 361, serine 362, and lysine 383. The active-site Proton acceptor is the lysine 332.

This sequence belongs to the enolase family. The cofactor is Mg(2+).

Its subcellular location is the cytoplasm. It localises to the secreted. The protein localises to the cell surface. It catalyses the reaction (2R)-2-phosphoglycerate = phosphoenolpyruvate + H2O. It functions in the pathway carbohydrate degradation; glycolysis; pyruvate from D-glyceraldehyde 3-phosphate: step 4/5. Functionally, catalyzes the reversible conversion of 2-phosphoglycerate (2-PG) into phosphoenolpyruvate (PEP). It is essential for the degradation of carbohydrates via glycolysis. The chain is Enolase from Campylobacter jejuni subsp. jejuni serotype O:2 (strain ATCC 700819 / NCTC 11168).